We begin with the raw amino-acid sequence, 147 residues long: Protein-export protein SecB (147 aa).

It belongs to the SecB family. As to quaternary structure, homotetramer, a dimer of dimers. One homotetramer interacts with 1 SecA dimer.

It localises to the cytoplasm. Functionally, one of the proteins required for the normal export of preproteins out of the cell cytoplasm. It is a molecular chaperone that binds to a subset of precursor proteins, maintaining them in a translocation-competent state. It also specifically binds to its receptor SecA. This chain is Protein-export protein SecB, found in Neisseria meningitidis serogroup C (strain 053442).